The primary structure comprises 590 residues: G protein-coupled receptor kinase 5 (590 aa).

An N-terminal region spans residues 1–185; sequence MELENIVANT…LERQPVTKNT (185 aa). The tract at residues 20-39 is interaction with calmodulin; that stretch reads GGKRKGKSKKWKEILKFPHI. In terms of domain architecture, RGS spans 53 to 171; it reads YCSLCDKQPV…LDSMYFDRFL (119 aa). The Protein kinase domain occupies 186–448; sequence FRQYRVLGKG…AAEVKRHPFF (263 aa). ATP is bound by residues 192-200 and Lys-215; that span reads LGKGGFGEV. Asp-311 functions as the Proton acceptor in the catalytic mechanism. The Nuclear localization signal signature appears at 388-395; the sequence is RKEKVKRE. The region spanning 449 to 514 is the AGC-kinase C-terminal domain; sequence RNMNFKRLEA…GSVPIPWQSE (66 aa). Ser-484 is modified (phosphoserine; by autocatalysis). Thr-485 is modified (phosphothreonine; by autocatalysis). The segment at 546–565 is sufficient for membrane localization; the sequence is PKKGLLQRLFKRQHQNNSKS. The tract at residues 554 to 590 is disordered; it reads LFKRQHQNNSKSSPNSKTSFNHHINSNHVSSNSTGSS. Low complexity predominate over residues 561–590; the sequence is NNSKSSPNSKTSFNHHINSNHVSSNSTGSS. Position 579 is a phosphoserine (Ser-579).

This sequence belongs to the protein kinase superfamily. AGC Ser/Thr protein kinase family. GPRK subfamily. Interacts with ST13 (via the C-terminus 303-319 AA). Interacts with TP53/p53. Interacts with HTR4 (via C-terminus 330-346 AA); this interaction is promoted by 5-HT (serotonin). Interacts with HDAC5. Interacts with GIT1. In terms of processing, autophosphorylated. Autophosphorylation may play a critical role in the regulation of GRK5 kinase activity. As to expression, highest levels in lung, heart, retina, lingual epithelium. Very little in brain, liver, kidney.

The protein resides in the cytoplasm. It is found in the nucleus. The protein localises to the cell membrane. It catalyses the reaction [G-protein-coupled receptor] + ATP = [G-protein-coupled receptor]-phosphate + ADP + H(+). Its activity is regulated as follows. Inhibited by calmodulin with an IC(50) of 50 nM. Calmodulin inhibits GRK5 association with receptor and phospholipid. In terms of biological role, serine/threonine kinase that phosphorylates preferentially the activated forms of a variety of G-protein-coupled receptors (GPCRs). Such receptor phosphorylation initiates beta-arrestin-mediated receptor desensitization, internalization, and signaling events leading to their down-regulation. Phosphorylates a variety of GPCRs, including adrenergic receptors (Beta-2 adrenergic receptor), muscarinic acetylcholine receptors (more specifically Gi-coupled M2/M4 subtypes), dopamine receptors and opioid receptors. In addition to GPCRs, also phosphorylates various substrates: Hsc70-interacting protein/ST13, TP53/p53, HDAC5, and arrestin-1/ARRB1. Phosphorylation of ARRB1 by GRK5 inhibits G-protein independent MAPK1/MAPK3 signaling downstream of 5HT4-receptors. Phosphorylation of HDAC5, a repressor of myocyte enhancer factor 2 (MEF2) leading to nuclear export of HDAC5 and allowing MEF2-mediated transcription. Phosphorylation of TP53/p53, a crucial tumor suppressor, inhibits TP53/p53-mediated apoptosis. Phosphorylation of ST13 regulates internalization of the chemokine receptor. Phosphorylates rhodopsin (RHO) (in vitro) and a non G-protein-coupled receptor, LRP6 during Wnt signaling (in vitro). In Bos taurus (Bovine), this protein is G protein-coupled receptor kinase 5 (GRK5).